A 608-amino-acid polypeptide reads, in one-letter code: Bifunctional dihydrofolate reductase-thymidylate synthase (608 aa).

The region spanning aspartate 10–lysine 228 is the DHFR domain. Residue isoleucine 14 to cysteine 15 participates in substrate binding. Alanine 16 is a binding site for NADP(+). Position 31 (valine 31) interacts with substrate. Residue glycine 39–valine 45 participates in NADP(+) binding. Positions 54 and 108 each coordinate substrate. NADP(+) contacts are provided by residues arginine 106–asparagine 108, serine 128–threonine 130, and asparagine 144. Substrate contacts are provided by isoleucine 164, tyrosine 170, and threonine 185. Glycine 165–glutamate 172 contacts NADP(+). The segment at tyrosine 322–alanine 608 is thymidylate synthase. A dUMP-binding site is contributed by arginine 345. Cysteine 490 is a catalytic residue. Residues histidine 491, glutamine 509–aspartate 513, asparagine 521, and histidine 551–tyrosine 553 contribute to the dUMP site.

It in the N-terminal section; belongs to the dihydrofolate reductase family. In the C-terminal section; belongs to the thymidylate synthase family. In terms of assembly, homodimer.

The enzyme catalyses (6S)-5,6,7,8-tetrahydrofolate + NADP(+) = 7,8-dihydrofolate + NADPH + H(+). It carries out the reaction dUMP + (6R)-5,10-methylene-5,6,7,8-tetrahydrofolate = 7,8-dihydrofolate + dTMP. It functions in the pathway cofactor biosynthesis; tetrahydrofolate biosynthesis; 5,6,7,8-tetrahydrofolate from 7,8-dihydrofolate: step 1/1. Its function is as follows. Bifunctional enzyme. Involved in de novo dTMP biosynthesis. Key enzyme in folate metabolism. Catalyzes an essential reaction for de novo glycine and purine synthesis, DNA precursor synthesis, and for the conversion of dUMP to dTMP. The protein is Bifunctional dihydrofolate reductase-thymidylate synthase of Plasmodium falciparum (isolate K1 / Thailand).